A 267-amino-acid chain; its full sequence is Glucosamine-6-phosphate deaminase (267 aa).

Residue D72 is the Proton acceptor; for enolization step of the active site. The active-site For ring-opening step is D141. The active-site Proton acceptor; for ring-opening step is the H143. The For ring-opening step role is filled by E148.

The protein belongs to the glucosamine/galactosamine-6-phosphate isomerase family. NagB subfamily. Homohexamer.

It catalyses the reaction alpha-D-glucosamine 6-phosphate + H2O = beta-D-fructose 6-phosphate + NH4(+). It functions in the pathway amino-sugar metabolism; N-acetylneuraminate degradation; D-fructose 6-phosphate from N-acetylneuraminate: step 5/5. Allosterically activated by N-acetylglucosamine 6-phosphate (GlcNAc6P). Catalyzes the reversible isomerization-deamination of glucosamine 6-phosphate (GlcN6P) to form fructose 6-phosphate (Fru6P) and ammonium ion. This is Glucosamine-6-phosphate deaminase from Actinobacillus pleuropneumoniae serotype 3 (strain JL03).